The sequence spans 601 residues: Aspartate--tRNA(Asp/Asn) ligase (601 aa).

Glu187 serves as a coordination point for L-aspartate. The aspartate stretch occupies residues 211–214 (QQFK). Positions 233 and 461 each coordinate L-aspartate. Residue 233-235 (RDE) coordinates ATP. Glu495 contributes to the ATP binding site. L-aspartate is bound at residue Arg502. 547–550 (GLDR) contacts ATP.

Belongs to the class-II aminoacyl-tRNA synthetase family. Type 1 subfamily. In terms of assembly, homodimer.

It localises to the cytoplasm. The enzyme catalyses tRNA(Asx) + L-aspartate + ATP = L-aspartyl-tRNA(Asx) + AMP + diphosphate. In terms of biological role, aspartyl-tRNA synthetase with relaxed tRNA specificity since it is able to aspartylate not only its cognate tRNA(Asp) but also tRNA(Asn). Reaction proceeds in two steps: L-aspartate is first activated by ATP to form Asp-AMP and then transferred to the acceptor end of tRNA(Asp/Asn). The chain is Aspartate--tRNA(Asp/Asn) ligase from Pelodictyon phaeoclathratiforme (strain DSM 5477 / BU-1).